Consider the following 206-residue polypeptide: Small ribosomal subunit protein uS4 (206 aa).

In terms of domain architecture, S4 RNA-binding spans 96–156; it reads GRLDNVVYRM…EKAKKQSRVK (61 aa).

The protein belongs to the universal ribosomal protein uS4 family. Part of the 30S ribosomal subunit. Contacts protein S5. The interaction surface between S4 and S5 is involved in control of translational fidelity.

Functionally, one of the primary rRNA binding proteins, it binds directly to 16S rRNA where it nucleates assembly of the body of the 30S subunit. With S5 and S12 plays an important role in translational accuracy. The protein is Small ribosomal subunit protein uS4 of Enterobacter sp. (strain 638).